The following is a 316-amino-acid chain: Tyrosine--tRNA ligase 2 (316 aa).

The L-tyrosine site is built by Y26, Y146, Q150, D153, and Q168. Residues 219-223 carry the 'KMSKS' region motif; sequence KMSKS. Position 222 (K222) interacts with ATP.

This sequence belongs to the class-I aminoacyl-tRNA synthetase family. TyrS type 4 subfamily. As to quaternary structure, homodimer.

It localises to the cytoplasm. The enzyme catalyses tRNA(Tyr) + L-tyrosine + ATP = L-tyrosyl-tRNA(Tyr) + AMP + diphosphate + H(+). Catalyzes the attachment of tyrosine to tRNA(Tyr) in a two-step reaction: tyrosine is first activated by ATP to form Tyr-AMP and then transferred to the acceptor end of tRNA(Tyr). The protein is Tyrosine--tRNA ligase 2 of Pyrobaculum aerophilum (strain ATCC 51768 / DSM 7523 / JCM 9630 / CIP 104966 / NBRC 100827 / IM2).